Consider the following 383-residue polypeptide: V-type proton ATPase subunit C 1-A (383 aa).

The residue at position 2 (T2) is an N-acetylthreonine.

The protein belongs to the V-ATPase C subunit family. In terms of assembly, V-ATPase is a heteromultimeric enzyme made up of two complexes: the ATP-hydrolytic V1 complex and the proton translocation V0 complex. The V1 complex consists of three catalytic AB heterodimers that form a heterohexamer, three peripheral stalks each consisting of EG heterodimers, one central rotor including subunits D and F, and the regulatory subunits C and H. The proton translocation complex V0 consists of the proton transport subunit a, a ring of proteolipid subunits c9c'', rotary subunit d, subunits e and f, and two accessory subunits.

In terms of biological role, subunit of the V1 complex of vacuolar(H+)-ATPase (V-ATPase), a multisubunit enzyme composed of a peripheral complex (V1) that hydrolyzes ATP and a membrane integral complex (V0) that translocates protons. V-ATPase is responsible for acidifying and maintaining the pH of intracellular compartments and in some cell types, is targeted to the plasma membrane, where it is responsible for acidifying the extracellular environment. Subunit C is necessary for the assembly of the catalytic sector of the enzyme and is likely to have a specific function in its catalytic activity. The polypeptide is V-type proton ATPase subunit C 1-A (atp6v1c1a) (Danio rerio (Zebrafish)).